We begin with the raw amino-acid sequence, 549 residues long: CTP synthase (549 aa).

The amidoligase domain stretch occupies residues 1–266 (MSAKYIFVTG…DKLALRYLHL (266 aa)). Serine 14 contributes to the CTP binding site. Serine 14 provides a ligand contact to UTP. ATP contacts are provided by residues 15-20 (SLGKGL) and aspartate 72. Residues aspartate 72 and glutamate 140 each coordinate Mg(2+). CTP contacts are provided by residues 147–149 (DIE), 187–192 (KTKPTQ), and lysine 223. Residues 187–192 (KTKPTQ) and lysine 223 each bind UTP. Residue 239–241 (KDV) coordinates ATP. Residues 291-533 (SIGIVGKYVE…VKAAYQNHKP (243 aa)) enclose the Glutamine amidotransferase type-1 domain. An L-glutamine-binding site is contributed by glycine 353. Residue cysteine 380 is the Nucleophile; for glutamine hydrolysis of the active site. Residues 381–384 (LGMQ), glutamate 404, and arginine 461 contribute to the L-glutamine site. Residues histidine 506 and glutamate 508 contribute to the active site.

Belongs to the CTP synthase family. Homotetramer.

It carries out the reaction UTP + L-glutamine + ATP + H2O = CTP + L-glutamate + ADP + phosphate + 2 H(+). It catalyses the reaction L-glutamine + H2O = L-glutamate + NH4(+). The catalysed reaction is UTP + NH4(+) + ATP = CTP + ADP + phosphate + 2 H(+). Its pathway is pyrimidine metabolism; CTP biosynthesis via de novo pathway; CTP from UDP: step 2/2. Its activity is regulated as follows. Allosterically activated by GTP, when glutamine is the substrate; GTP has no effect on the reaction when ammonia is the substrate. The allosteric effector GTP functions by stabilizing the protein conformation that binds the tetrahedral intermediate(s) formed during glutamine hydrolysis. Inhibited by the product CTP, via allosteric rather than competitive inhibition. Functionally, catalyzes the ATP-dependent amination of UTP to CTP with either L-glutamine or ammonia as the source of nitrogen. Regulates intracellular CTP levels through interactions with the four ribonucleotide triphosphates. The protein is CTP synthase of Acidobacterium capsulatum (strain ATCC 51196 / DSM 11244 / BCRC 80197 / JCM 7670 / NBRC 15755 / NCIMB 13165 / 161).